Here is a 434-residue protein sequence, read N- to C-terminus: MIEKTYCQDIKPELDGKRVKLAGWVYSNMRVGKKIFLWIRDSTGIIQTVIAKNVVGEDVFETAKKLGRESSVIVEGIVKADERAPGGAEVHVEKLKVIQAVSEFPIPENPEQASPELLLDYRHLHIRSPKVSAIMRVKETLIMAAREWLLREGWHEVFPPILVTGAVEGGATLFKLKYFDKVAYLSQSAQLYLEAAIFGLEKVWSLTPSFRAEKSRTRRHLTEFWHLELEAAWMDLWDIMKVEEELVSYMVQRTLELRKKEIEMFRDDLTTLKNTEPPFPRISYDEAIEILQSKGVKIEWGDDMGADEERVLTQEFDRPFFVYGYPKHIKAFYMKEDPNDPRKVLAADMLAPEGYGEIIGGSEREDNYDKLVQRIKEEGMDPKDYEWYLDLRKYGSVPHSGFGLGVERLVAWVLKLDHIRWATLFPRTPARIYP.

It belongs to the class-II aminoacyl-tRNA synthetase family.

Its subcellular location is the cytoplasm. The catalysed reaction is tRNA(Asn) + L-asparagine + ATP = L-asparaginyl-tRNA(Asn) + AMP + diphosphate + H(+). This is Asparagine--tRNA ligase from Pyrococcus abyssi (strain GE5 / Orsay).